A 597-amino-acid chain; its full sequence is UvrABC system protein C (597 aa).

The region spanning 14 to 91 is the GIY-YIG domain; the sequence is KKPGCYLWKD…INQYQPRFNL (78 aa).

Belongs to the UvrC family. As to quaternary structure, interacts with UvrB in an incision complex.

Its subcellular location is the cytoplasm. In terms of biological role, the UvrABC repair system catalyzes the recognition and processing of DNA lesions. UvrC both incises the 5' and 3' sides of the lesion. The N-terminal half is responsible for the 3' incision and the C-terminal half is responsible for the 5' incision. The sequence is that of UvrABC system protein C from Mycoplasma genitalium (strain ATCC 33530 / DSM 19775 / NCTC 10195 / G37) (Mycoplasmoides genitalium).